Reading from the N-terminus, the 162-residue chain is MSFLDRTARAFLLTELVQGLALTLRYMFKPKVTINYPYEKGPLSVRFRGEHALRRYPNGEERCIACKLCEAICPAQAITIEPEPRDDGSRRARRYDLDMTKCIYCGLCQEACPVDAIVEGPNFEYATETRAELMYNKSKLLANGDRWEAELAFRIAADAPYR.

4Fe-4S ferredoxin-type domains follow at residues 53 to 83 (LRRY…IEPE) and 93 to 122 (RRYD…EGPN). The [4Fe-4S] cluster site is built by cysteine 63, cysteine 66, cysteine 69, cysteine 73, cysteine 102, cysteine 105, cysteine 108, and cysteine 112.

Belongs to the complex I 23 kDa subunit family. In terms of assembly, NDH-1 is composed of 14 different subunits. Subunits NuoA, H, J, K, L, M, N constitute the membrane sector of the complex. The cofactor is [4Fe-4S] cluster.

It localises to the cell inner membrane. The catalysed reaction is a quinone + NADH + 5 H(+)(in) = a quinol + NAD(+) + 4 H(+)(out). Its function is as follows. NDH-1 shuttles electrons from NADH, via FMN and iron-sulfur (Fe-S) centers, to quinones in the respiratory chain. The immediate electron acceptor for the enzyme in this species is believed to be ubiquinone. Couples the redox reaction to proton translocation (for every two electrons transferred, four hydrogen ions are translocated across the cytoplasmic membrane), and thus conserves the redox energy in a proton gradient. In Paramagnetospirillum magneticum (strain ATCC 700264 / AMB-1) (Magnetospirillum magneticum), this protein is NADH-quinone oxidoreductase subunit I.